The following is a 926-amino-acid chain: LPS-assembly protein LptD (926 aa).

A signal peptide spans 1–22 (MALKSPAFRKKFPLLVTGSLLA). The interval 55–91 (AAAVDLPPRPVHDTTSVSSNGTVTSQGTSSGEQSAGT) is disordered. Over residues 68-91 (TTSVSSNGTVTSQGTSSGEQSAGT) the composition is skewed to low complexity.

This sequence belongs to the LptD family. In terms of assembly, component of the lipopolysaccharide transport and assembly complex. Interacts with LptE and LptA.

Its subcellular location is the cell outer membrane. Functionally, together with LptE, is involved in the assembly of lipopolysaccharide (LPS) at the surface of the outer membrane. This is LPS-assembly protein LptD from Pseudomonas syringae pv. syringae (strain B728a).